Here is a 584-residue protein sequence, read N- to C-terminus: MPVVNHEDSEFHLSHTEEDKLNEFQVITNFPPEDLPDVVRLLRNHGWQLEPALSRYFDGEWKGEPDQMGEPTQTSTPMAETLVPPALGPRPLLFTASLPVVRPLPANFRNDFRTIGLNGRSNTVWSMFESFSYDGNPFLFILLLIPRIINRLSATIFTFFCTLLSLHSISGGGNSGKPKISKVPKAPTRETHIPLAEILGDTKDKDAFCELKSFKPDISFNEALRIAKEEFKFMLLILVGDTYDTDTDTVDVNSKLLLEKILLNKKTLQYLRKIDNDLIIYLKCVHELEPWLVARQLGVRNTPEIFLIANVANKASHSETLPSQRLSILGKLKVNSLNRFLQSLTNVVEKYTPELVVNKTEMHELRMSREIKKLQEDAYKKSLEMDRIKAIEKEKSLKHAQDLKLNSTARQLKWLKACIDEIQPFETTGKQATLQFRTSSGKRFVKKFPSMTTLYQIYQSIGCHIYLAVYSSDPAEWSNALQDKIRQLSADDDMLCFKEGQLETATATTIEELGHIINNELTSFDLERGKLEFDFELVSPFPKYTVHPNEHMSVDQVPQLWPNGSLLVEALDEEDEEDEENEEQ.

Residues 1 to 80 (MPVVNHEDSE…PTQTSTPMAE (80 aa)) are Cytoplasmic-facing. A helical transmembrane segment spans residues 81 to 101 (TLVPPALGPRPLLFTASLPVV). At 102-151 (RPLPANFRNDFRTIGLNGRSNTVWSMFESFSYDGNPFLFILLLIPRIINR) the chain is on the lumenal side. Residues 152–172 (LSATIFTFFCTLLSLHSISGG) traverse the membrane as a helical segment. Topologically, residues 173-584 (GNSGKPKISK…DEEDEENEEQ (412 aa)) are cytoplasmic. Residues 426 to 570 (ETTGKQATLQ…WPNGSLLVEA (145 aa)) enclose the UBX domain.

Component of the DOA10 ubiquitin ligase complex which contains E3 ligase SSM4/DOA10 and CDC48-binding protein UBX2/SEL1. Component of the HRD1 ubiquitin ligase complex which contains the E3 ligase HRD1, its cofactors HRD3, USA1 and DER1, substrate recruiting factor YOS9 and UBX2. In ERAD-L, HRD3 and YOS9 jointly bind misfolded glycoproteins in the endoplasmic reticulum (ER) lumen. Movement of ERAD-L substrates through the ER membrane is facilitated by HRD1 and DER1 which have lateral gates facing each other and which distort the membrane region between the lateral gates, making it much thinner than a normal phospholipid bilayer. Substrates insert into the membrane as a hairpin loop with one strand interacting with DER1 and the other with HRD1. Both the DOA10 and HRD1 ubiquitin ligase complexes interact with the heterotrimeric CDC48-NPL4-UFD1 ATPase complex which is recruited by UBX2 via its interaction with CDC48 and which moves ubiquitinated substrates to the cytosol for targeting to the proteasome.

The protein resides in the endoplasmic reticulum membrane. Functionally, integral endoplasmic reticulum membrane protein that coordinates the assembly of the ER-associated protein degradation (ERAD) machinery at the ER membrane. Mediates binding of CDC48 to the E3 ubiquitin ligases SSM4/DOA10 and HRD1, and to ERAD substrates. Component of the DOA10 ubiquitin ligase complex, which is part of the ERAD-C pathway responsible for the rapid degradation of membrane proteins with misfolded cytoplasmic domains. ERAD-C substrates are ubiquitinated through DOA10 in conjunction with the E2 ubiquitin-conjugating enzymes UBC6 and UBC7-CUE1. Also a component of the HRD1 ubiquitin ligase complex, which is part of the ERAD-L and ERAD-M pathways responsible for the rapid degradation of soluble lumenal and membrane proteins with misfolded lumenal domains (ERAD-L), or ER-membrane proteins with misfolded transmembrane domains (ERAD-M). ERAD-L substrates are ubiquitinated through HRD1 in conjunction with the E2 ubiquitin-conjugating enzymes UBC1 and UBC7-CUE1. Ubiquitinated substrates are then removed to the cytosol via the action of the CDC48-NPL4-UFD1 ATPase complex and targeted to the proteasome. This is UBX domain-containing protein 2 (UBX2) from Saccharomyces cerevisiae (strain ATCC 204508 / S288c) (Baker's yeast).